A 241-amino-acid polypeptide reads, in one-letter code: 1-(5-phosphoribosyl)-5-[(5-phosphoribosylamino)methylideneamino] imidazole-4-carboxamide isomerase (241 aa).

The Proton acceptor role is filled by Asp-10. Asp-131 functions as the Proton donor in the catalytic mechanism.

Belongs to the HisA/HisF family.

Its subcellular location is the cytoplasm. The catalysed reaction is 1-(5-phospho-beta-D-ribosyl)-5-[(5-phospho-beta-D-ribosylamino)methylideneamino]imidazole-4-carboxamide = 5-[(5-phospho-1-deoxy-D-ribulos-1-ylimino)methylamino]-1-(5-phospho-beta-D-ribosyl)imidazole-4-carboxamide. The protein operates within amino-acid biosynthesis; L-histidine biosynthesis; L-histidine from 5-phospho-alpha-D-ribose 1-diphosphate: step 4/9. This chain is 1-(5-phosphoribosyl)-5-[(5-phosphoribosylamino)methylideneamino] imidazole-4-carboxamide isomerase, found in Bifidobacterium longum (strain NCC 2705).